The following is a 101-amino-acid chain: Small ribosomal subunit protein uS14 (101 aa).

Belongs to the universal ribosomal protein uS14 family. In terms of assembly, part of the 30S ribosomal subunit. Contacts proteins S3 and S10.

Binds 16S rRNA, required for the assembly of 30S particles and may also be responsible for determining the conformation of the 16S rRNA at the A site. In Vibrio vulnificus (strain CMCP6), this protein is Small ribosomal subunit protein uS14.